The primary structure comprises 252 residues: Major prion protein (252 aa).

Residues 1 to 22 (MANLGCWMLVLFVATWSDLGLC) form the signal peptide. Residues 23–38 (KKRPKPGGWNTGGSRY) form an interaction with ADGRG6 region. Residues 23–229 (KKRPKPGGWN…ESQAYYQRGS (207 aa)) form an interaction with GRB2, ERI3 and SYN1 region. Residues 26-106 (PKPGGWNTGG…QWNKPSKPKT (81 aa)) form a disordered region. 5 tandem repeats follow at residues 51–58 (PQGGGWGQ), 59–66 (PHGGGWGQ), 67–74 (PHGGGWGQ), 75–82 (PHGGSWGQ), and 83–90 (PHGGGWGQ). Positions 51 to 90 (PQGGGWGQPHGGGWGQPHGGGWGQPHGGSWGQPHGGGWGQ) are 5 X 8 AA tandem repeats of P-H-G-G-G-W-G-Q. Positions 52-94 (QGGGWGQPHGGGWGQPHGGGWGQPHGGSWGQPHGGGWGQGGGT) are enriched in gly residues. Cu(2+) is bound by residues His-60, Gly-61, Gly-62, His-68, Gly-69, Gly-70, His-76, Gly-77, Gly-78, His-84, Gly-85, and Gly-86. Cys-178 and Cys-213 are joined by a disulfide. Asn-180 and Asn-196 each carry an N-linked (GlcNAc...) asparagine glycan. The GPI-anchor amidated serine moiety is linked to residue Ser-229. The propeptide at 230 to 252 (SMVLFSSPPVILLISFLIFLIVG) is removed in mature form.

The protein belongs to the prion family. In terms of assembly, monomer and homodimer. Has a tendency to aggregate into amyloid fibrils containing a cross-beta spine, formed by a steric zipper of superposed beta-strands. Soluble oligomers may represent an intermediate stage on the path to fibril formation. Copper binding may promote oligomerization. Interacts with GRB2, APP, ERI3/PRNPIP and SYN1. Mislocalized cytosolically exposed PrP interacts with MGRN1; this interaction alters MGRN1 subcellular location and causes lysosomal enlargement. Interacts with APP. Interacts with KIAA1191. Interacts with ADGRG6.

The protein resides in the cell membrane. Its subcellular location is the golgi apparatus. Its primary physiological function is unclear. May play a role in neuronal development and synaptic plasticity. May be required for neuronal myelin sheath maintenance. May promote myelin homeostasis through acting as an agonist for ADGRG6 receptor. May play a role in iron uptake and iron homeostasis. Soluble oligomers are toxic to cultured neuroblastoma cells and induce apoptosis (in vitro). Association with GPC1 (via its heparan sulfate chains) targets PRNP to lipid rafts. Also provides Cu(2+) or Zn(2+) for the ascorbate-mediated GPC1 deaminase degradation of its heparan sulfate side chains. The polypeptide is Major prion protein (PRNP) (Sapajus apella (Brown-capped capuchin)).